A 266-amino-acid chain; its full sequence is MTAQFRFPRFFVTTPGPCPYLAGRTERKVFTELSGPNAAELNDALGRIGFRRSQGVAYRPTCVDCQACVSVRVVANEFRPNASQRKLIRRHADLDISVCKPWTTEEQFALLRRYLKARHPGGGMAQMDELDFADMVEQTPVKTHVVEYREPATNGRPGKLVGACLTDTQSDGVSMVYSFFETEDDSRPGLGTFIILEHIRRAAEGGLPYVYLGYWVEGSARMQYKTRFQPLERLSAGGWHRFEAPPLPAEGTGAGFPAPSKLGQLI.

The protein belongs to the R-transferase family. Bpt subfamily.

The protein localises to the cytoplasm. The enzyme catalyses N-terminal L-glutamyl-[protein] + L-leucyl-tRNA(Leu) = N-terminal L-leucyl-L-glutamyl-[protein] + tRNA(Leu) + H(+). It catalyses the reaction N-terminal L-aspartyl-[protein] + L-leucyl-tRNA(Leu) = N-terminal L-leucyl-L-aspartyl-[protein] + tRNA(Leu) + H(+). Its function is as follows. Functions in the N-end rule pathway of protein degradation where it conjugates Leu from its aminoacyl-tRNA to the N-termini of proteins containing an N-terminal aspartate or glutamate. The polypeptide is Aspartate/glutamate leucyltransferase (Rhizorhabdus wittichii (strain DSM 6014 / CCUG 31198 / JCM 15750 / NBRC 105917 / EY 4224 / RW1) (Sphingomonas wittichii)).